The primary structure comprises 159 residues: Ribosomal RNA large subunit methyltransferase H (159 aa).

S-adenosyl-L-methionine contacts are provided by residues L76, G108, and 127-132; that span reads FSKMTF.

Belongs to the RNA methyltransferase RlmH family. As to quaternary structure, homodimer.

Its subcellular location is the cytoplasm. The enzyme catalyses pseudouridine(1915) in 23S rRNA + S-adenosyl-L-methionine = N(3)-methylpseudouridine(1915) in 23S rRNA + S-adenosyl-L-homocysteine + H(+). Specifically methylates the pseudouridine at position 1915 (m3Psi1915) in 23S rRNA. The polypeptide is Ribosomal RNA large subunit methyltransferase H (Clostridium botulinum (strain 657 / Type Ba4)).